We begin with the raw amino-acid sequence, 344 residues long: Photosystem II protein D1 (344 aa).

Residue Thr2 is modified to N-acetylthreonine. The residue at position 2 (Thr2) is a Phosphothreonine. The next 3 membrane-spanning stretches (helical) occupy residues 29–46 (YIGW…TATS), 118–133 (HFFL…EWEL), and 142–156 (WIAV…AATA). His118 lines the chlorophyll a pocket. Tyr126 provides a ligand contact to pheophytin a. [CaMn4O5] cluster-binding residues include Asp170 and Glu189. A helical transmembrane segment spans residues 197-218 (FHMLGVAGVFGGSLFSAMHGSL). His198 is a binding site for chlorophyll a. A quinone-binding positions include His215 and 264 to 265 (SF). Position 215 (His215) interacts with Fe cation. Residue His272 coordinates Fe cation. Residues 274–288 (FLAAWPVIGIWFTAL) form a helical membrane-spanning segment. [CaMn4O5] cluster-binding residues include His332, Glu333, Asp342, and Ala344.

Belongs to the reaction center PufL/M/PsbA/D family. PSII is composed of 1 copy each of membrane proteins PsbA, PsbB, PsbC, PsbD, PsbE, PsbF, PsbH, PsbI, PsbJ, PsbK, PsbL, PsbM, PsbT, PsbX, PsbY, PsbZ, Psb30/Ycf12, at least 3 peripheral proteins of the oxygen-evolving complex and a large number of cofactors. It forms dimeric complexes. Requires The D1/D2 heterodimer binds P680, chlorophylls that are the primary electron donor of PSII, and subsequent electron acceptors. It shares a non-heme iron and each subunit binds pheophytin, quinone, additional chlorophylls, carotenoids and lipids. D1 provides most of the ligands for the Mn4-Ca-O5 cluster of the oxygen-evolving complex (OEC). There is also a Cl(-1) ion associated with D1 and D2, which is required for oxygen evolution. The PSII complex binds additional chlorophylls, carotenoids and specific lipids. as cofactor. Post-translationally, tyr-161 forms a radical intermediate that is referred to as redox-active TyrZ, YZ or Y-Z.

The protein localises to the plastid. Its subcellular location is the chloroplast thylakoid membrane. The enzyme catalyses 2 a plastoquinone + 4 hnu + 2 H2O = 2 a plastoquinol + O2. In terms of biological role, photosystem II (PSII) is a light-driven water:plastoquinone oxidoreductase that uses light energy to abstract electrons from H(2)O, generating O(2) and a proton gradient subsequently used for ATP formation. It consists of a core antenna complex that captures photons, and an electron transfer chain that converts photonic excitation into a charge separation. The D1/D2 (PsbA/PsbD) reaction center heterodimer binds P680, the primary electron donor of PSII as well as several subsequent electron acceptors. In Pleurastrum terricola (Filamentous green alga), this protein is Photosystem II protein D1.